Consider the following 352-residue polypeptide: Glucose 1-dehydrogenase 1 (352 aa).

C35 contributes to the Zn(2+) binding site. T37 provides a ligand contact to substrate. Positions 60 and 61 each coordinate Zn(2+). A substrate-binding site is contributed by N83. Zn(2+) contacts are provided by C87, C90, C93, and C101. Substrate-binding residues include E108, Q144, and D148. Zn(2+) is bound at residue Q144. NADP(+)-binding positions include 182-185 (TGTI), 204-206 (NKR), 264-266 (FGF), 292-294 (LIN), and K341. N294 provides a ligand contact to substrate.

It belongs to the zinc-containing alcohol dehydrogenase family. Glucose 1-dehydrogenase subfamily. Zn(2+) serves as cofactor.

It catalyses the reaction D-glucose + NAD(+) = D-glucono-1,5-lactone + NADH + H(+). The enzyme catalyses D-glucose + NADP(+) = D-glucono-1,5-lactone + NADPH + H(+). Its function is as follows. Catalyzes the NAD(P)(+)-dependent oxidation of D-glucose to D-gluconate via gluconolactone. Can utilize both NAD(+) and NADP(+) as electron acceptor. Is involved in the degradation of glucose through a non-phosphorylative variant of the Entner-Doudoroff pathway. The polypeptide is Glucose 1-dehydrogenase 1 (Picrophilus torridus (strain ATCC 700027 / DSM 9790 / JCM 10055 / NBRC 100828 / KAW 2/3)).